The following is a 113-amino-acid chain: Hydrogenase maturation factor HypA (113 aa).

His2 contacts Ni(2+). 4 residues coordinate Zn(2+): Cys73, Cys76, Cys89, and Cys92.

It belongs to the HypA/HybF family.

Involved in the maturation of [NiFe] hydrogenases. Required for nickel insertion into the metal center of the hydrogenase. The sequence is that of Hydrogenase maturation factor HypA from Rhodopseudomonas palustris (strain TIE-1).